A 294-amino-acid polypeptide reads, in one-letter code: Pyridoxal 5'-phosphate synthase subunit PdxS (294 aa).

Aspartate 24 lines the D-ribose 5-phosphate pocket. The active-site Schiff-base intermediate with D-ribose 5-phosphate is lysine 81. Position 153 (glycine 153) interacts with D-ribose 5-phosphate. Arginine 165 is a D-glyceraldehyde 3-phosphate binding site. Residues glycine 214 and glycine 235 to serine 236 each bind D-ribose 5-phosphate.

Belongs to the PdxS/SNZ family. In the presence of PdxT, forms a dodecamer of heterodimers.

It carries out the reaction aldehydo-D-ribose 5-phosphate + D-glyceraldehyde 3-phosphate + L-glutamine = pyridoxal 5'-phosphate + L-glutamate + phosphate + 3 H2O + H(+). It participates in cofactor biosynthesis; pyridoxal 5'-phosphate biosynthesis. Functionally, catalyzes the formation of pyridoxal 5'-phosphate from ribose 5-phosphate (RBP), glyceraldehyde 3-phosphate (G3P) and ammonia. The ammonia is provided by the PdxT subunit. Can also use ribulose 5-phosphate and dihydroxyacetone phosphate as substrates, resulting from enzyme-catalyzed isomerization of RBP and G3P, respectively. This Anoxybacillus flavithermus (strain DSM 21510 / WK1) protein is Pyridoxal 5'-phosphate synthase subunit PdxS.